The chain runs to 310 residues: MRIVFAGTPEFAAEHLKALLDSPYEIVAVYTQPDRPAGRGQKLMPSAVKALAVAHDIPVFQPQTLRNADAQAELAALKPDLMVVVAYGLILPQAVLDIPRLGCINSHASLLPRWRGAAPIQRAVEAGDAESGVTVMRMEAGLDTGPMLLKVVTPISADDTGGTLHDRLAEMGPPAVVQAIAGLADGSLQGEVQDDALATYAHKLNKDEARIDWSRPAVELERLIRAFNPWPVCHSTLDGESVKVLAANLSTGKGAPGEILSASKDGLVVACGDQALSLTRLQLPGGKALSFSDLFNSRREKFAAGKVLGQ.

109–112 contributes to the (6S)-5,6,7,8-tetrahydrofolate binding site; that stretch reads SLLP.

It belongs to the Fmt family.

The enzyme catalyses L-methionyl-tRNA(fMet) + (6R)-10-formyltetrahydrofolate = N-formyl-L-methionyl-tRNA(fMet) + (6S)-5,6,7,8-tetrahydrofolate + H(+). Functionally, attaches a formyl group to the free amino group of methionyl-tRNA(fMet). The formyl group appears to play a dual role in the initiator identity of N-formylmethionyl-tRNA by promoting its recognition by IF2 and preventing the misappropriation of this tRNA by the elongation apparatus. This is Methionyl-tRNA formyltransferase from Pseudomonas putida (strain GB-1).